Here is a 301-residue protein sequence, read N- to C-terminus: Ribonuclease HIII (301 aa).

Positions 88-301 constitute an RNase H type-2 domain; the sequence is WSVLGSDEVG…TQKARQLARQ (214 aa). Residues aspartate 94, glutamate 95, and aspartate 197 each coordinate a divalent metal cation.

It belongs to the RNase HII family. RnhC subfamily. The cofactor is Mn(2+). Requires Mg(2+) as cofactor.

Its subcellular location is the cytoplasm. It catalyses the reaction Endonucleolytic cleavage to 5'-phosphomonoester.. Endonuclease that specifically degrades the RNA of RNA-DNA hybrids. This chain is Ribonuclease HIII, found in Limosilactobacillus fermentum (strain NBRC 3956 / LMG 18251) (Lactobacillus fermentum).